The sequence spans 168 residues: Ribosome maturation factor RimM (168 aa).

The PRC barrel domain occupies 97-168 (PNEYYYYELL…RLVVKVPEWI (72 aa)).

It belongs to the RimM family. Binds ribosomal protein uS19.

It localises to the cytoplasm. Its function is as follows. An accessory protein needed during the final step in the assembly of 30S ribosomal subunit, possibly for assembly of the head region. Essential for efficient processing of 16S rRNA. May be needed both before and after RbfA during the maturation of 16S rRNA. It has affinity for free ribosomal 30S subunits but not for 70S ribosomes. This Pseudothermotoga lettingae (strain ATCC BAA-301 / DSM 14385 / NBRC 107922 / TMO) (Thermotoga lettingae) protein is Ribosome maturation factor RimM.